Consider the following 503-residue polypeptide: Cytochrome P450 11B1, mitochondrial (503 aa).

Residues 1 to 24 (MAIWAKAEAWLAGPWLALNRARTL) constitute a mitochondrion transit peptide. Heme is bound at residue cysteine 450.

It belongs to the cytochrome P450 family. The cofactor is heme.

It localises to the mitochondrion inner membrane. It carries out the reaction a steroid + 2 reduced [adrenodoxin] + O2 + 2 H(+) = an 11beta-hydroxysteroid + 2 oxidized [adrenodoxin] + H2O. The enzyme catalyses 11-deoxycortisol + 2 reduced [adrenodoxin] + O2 + 2 H(+) = cortisol + 2 oxidized [adrenodoxin] + H2O. It catalyses the reaction 21-hydroxyprogesterone + 2 reduced [adrenodoxin] + O2 + 2 H(+) = corticosterone + 2 oxidized [adrenodoxin] + H2O. The catalysed reaction is corticosterone + 2 reduced [adrenodoxin] + O2 + 2 H(+) = 18-hydroxycorticosterone + 2 oxidized [adrenodoxin] + H2O. It carries out the reaction 18-hydroxycorticosterone + 2 reduced [adrenodoxin] + O2 + 2 H(+) = aldosterone + 2 oxidized [adrenodoxin] + 2 H2O. The enzyme catalyses 21-hydroxyprogesterone + 2 reduced [adrenodoxin] + O2 + 2 H(+) = 19-hydroxy-11-deoxycorticosterone + 2 oxidized [adrenodoxin] + H2O. It catalyses the reaction 19-hydroxy-11-deoxycorticosterone + 2 reduced [adrenodoxin] + O2 + 2 H(+) = 19-oxo-11-deoxycorticosterone + 2 oxidized [adrenodoxin] + 2 H2O. The protein operates within steroid biosynthesis; glucocorticoid biosynthesis. It participates in steroid hormone biosynthesis. Its function is as follows. A cytochrome P450 monooxygenase that catalyzes the biosynthesis of aldosterone and other adrenal corticoids. Differing from other species (such as human, rat and mice), it is able to catalyze three sequential oxidative reactions of 11-deoxycorticosterone (21-hydroxyprogesterone), namely 11-beta hydroxylation, followed by two successive oxidations at C18 yielding 18-hydroxy and then 18-oxo intermediates, and ending with the formation of aldosterone. Steroid 11beta, 18- and 19-hydroxylase. Mechanistically, uses molecular oxygen inserting one oxygen atom into a substrate and reducing the second into a water molecule. Two electrons are provided by NADPH via a two-protein mitochondrial transfer system comprising flavoprotein FDXR (adrenodoxin/ferredoxin reductase) and nonheme iron-sulfur protein FDX1 or FDX2 (adrenodoxin/ferredoxin). This Sus scrofa (Pig) protein is Cytochrome P450 11B1, mitochondrial (CYP11B1).